The following is an 89-amino-acid chain: UPF0223 protein BPUM_1362 (89 aa).

Belongs to the UPF0223 family.

This is UPF0223 protein BPUM_1362 from Bacillus pumilus (strain SAFR-032).